The sequence spans 150 residues: D-aminoacyl-tRNA deacylase (150 aa).

Positions 138 to 139 (GP) match the Gly-cisPro motif, important for rejection of L-amino acids motif.

Belongs to the DTD family. As to quaternary structure, homodimer.

Its subcellular location is the cytoplasm. The catalysed reaction is glycyl-tRNA(Ala) + H2O = tRNA(Ala) + glycine + H(+). The enzyme catalyses a D-aminoacyl-tRNA + H2O = a tRNA + a D-alpha-amino acid + H(+). In terms of biological role, an aminoacyl-tRNA editing enzyme that deacylates mischarged D-aminoacyl-tRNAs. Also deacylates mischarged glycyl-tRNA(Ala), protecting cells against glycine mischarging by AlaRS. Acts via tRNA-based rather than protein-based catalysis; rejects L-amino acids rather than detecting D-amino acids in the active site. By recycling D-aminoacyl-tRNA to D-amino acids and free tRNA molecules, this enzyme counteracts the toxicity associated with the formation of D-aminoacyl-tRNA entities in vivo and helps enforce protein L-homochirality. This Opitutus terrae (strain DSM 11246 / JCM 15787 / PB90-1) protein is D-aminoacyl-tRNA deacylase.